The chain runs to 71 residues: Small ribosomal subunit protein bS18 (71 aa).

This sequence belongs to the bacterial ribosomal protein bS18 family. Part of the 30S ribosomal subunit. Forms a tight heterodimer with protein bS6.

Binds as a heterodimer with protein bS6 to the central domain of the 16S rRNA, where it helps stabilize the platform of the 30S subunit. This Dichelobacter nodosus (strain VCS1703A) protein is Small ribosomal subunit protein bS18.